Here is a 424-residue protein sequence, read N- to C-terminus: UDP-sugar transporter protein SLC35A5 (424 aa).

The Cytoplasmic portion of the chain corresponds to Met-1–His-8. The chain crosses the membrane as a helical span at residues Pro-9–Leu-29. Topologically, residues Ser-30–Thr-53 are lumenal. A helical membrane pass occupies residues Val-54–Ile-74. Residues Lys-75–Asp-93 are Cytoplasmic-facing. Residues Phe-94–Ser-116 traverse the membrane as a helical segment. The Lumenal portion of the chain corresponds to Tyr-117 to Gln-119. Residues Pro-120–Leu-142 traverse the membrane as a helical segment. Residues Lys-143 to Asn-147 lie on the Cytoplasmic side of the membrane. A helical membrane pass occupies residues Trp-148–Thr-168. At Lys-169–Arg-228 the chain is on the lumenal side. Asn-204 carries N-linked (GlcNAc...) asparagine glycosylation. The helical transmembrane segment at Leu-229 to Tyr-249 threads the bilayer. Over Asn-250 to Ser-263 the chain is Cytoplasmic. Residues Ile-264–Gly-284 form a helical membrane-spanning segment. Residues Leu-285–Ser-303 are Lumenal-facing. Residues Ala-304–Leu-324 form a helical membrane-spanning segment. Residues Lys-325–Met-330 lie on the Cytoplasmic side of the membrane. Residues Phe-331 to Phe-351 form a helical membrane-spanning segment. Residues Asp-352–Arg-354 lie on the Lumenal side of the membrane. The helical transmembrane segment at Pro-355 to Ala-375 threads the bilayer. The Cytoplasmic portion of the chain corresponds to Ser-376 to Phe-424. A phosphoserine mark is found at Ser-394, Ser-416, and Ser-419. Positions Leu-397–Phe-424 are disordered. Residues Leu-408 to Asp-417 show a composition bias toward basic and acidic residues.

This sequence belongs to the nucleotide-sugar transporter family. SLC35A subfamily. As to quaternary structure, probably forms homooligomers and heterooligomers with SLC35A1, SLC35A2, SLC35A3 and SLC35A4.

It is found in the golgi apparatus membrane. The catalysed reaction is UMP(out) + UDP-alpha-D-glucuronate(in) = UMP(in) + UDP-alpha-D-glucuronate(out). It carries out the reaction UMP(out) + UDP-N-acetyl-alpha-D-glucosamine(in) = UMP(in) + UDP-N-acetyl-alpha-D-glucosamine(out). The enzyme catalyses UDP-N-acetyl-alpha-D-galactosamine(in) + UMP(out) = UDP-N-acetyl-alpha-D-galactosamine(out) + UMP(in). Its function is as follows. Probable UDP-sugar:UMP transmembrane antiporter involved in UDP-alpha-D-glucuronate/UDP-GlcA, UDP-GlcNAc/UDP-N-acetyl-alpha-D-glucosamine and UDP-N-acetyl-alpha-D-galactosamine/UDP-GalNAc transport from the cytosol to the lumen of the Golgi. This is UDP-sugar transporter protein SLC35A5 from Homo sapiens (Human).